A 129-amino-acid chain; its full sequence is Small ribosomal subunit protein uS11 (129 aa).

Belongs to the universal ribosomal protein uS11 family. In terms of assembly, part of the 30S ribosomal subunit. Interacts with proteins S7 and S18. Binds to IF-3.

Functionally, located on the platform of the 30S subunit, it bridges several disparate RNA helices of the 16S rRNA. Forms part of the Shine-Dalgarno cleft in the 70S ribosome. The polypeptide is Small ribosomal subunit protein uS11 (Bacteroides thetaiotaomicron (strain ATCC 29148 / DSM 2079 / JCM 5827 / CCUG 10774 / NCTC 10582 / VPI-5482 / E50)).